A 355-amino-acid chain; its full sequence is Serine acetyltransferase 4 (355 aa).

It belongs to the transferase hexapeptide repeat family. Homomultimer. In terms of tissue distribution, localized in vascular tissues, particularly in phloem.

It localises to the cytoplasm. It catalyses the reaction L-serine + acetyl-CoA = O-acetyl-L-serine + CoA. It functions in the pathway amino-acid biosynthesis; L-cysteine biosynthesis; L-cysteine from L-serine: step 1/2. With respect to regulation, feedback inhibitions by L-Ser and acetyl-CoA. The polypeptide is Serine acetyltransferase 4 (Arabidopsis thaliana (Mouse-ear cress)).